A 193-amino-acid polypeptide reads, in one-letter code: Small ribosomal subunit protein eS7 (193 aa).

This sequence belongs to the eukaryotic ribosomal protein eS7 family.

The sequence is that of Small ribosomal subunit protein eS7 (rps7) from Dictyostelium discoideum (Social amoeba).